The primary structure comprises 202 residues: Na(+)-translocating NADH-quinone reductase subunit E (202 aa).

Helical transmembrane passes span 11-31 (AVFI…FLAV), 39-59 (FGLG…NNLI), 81-101 (FLKF…LEMA), 114-134 (GIFL…AFMV), 144-164 (VVFG…LAAV), and 180-200 (LGIT…FSGV).

This sequence belongs to the NqrDE/RnfAE family. Composed of six subunits; NqrA, NqrB, NqrC, NqrD, NqrE and NqrF.

It is found in the cell inner membrane. It catalyses the reaction a ubiquinone + n Na(+)(in) + NADH + H(+) = a ubiquinol + n Na(+)(out) + NAD(+). Its function is as follows. NQR complex catalyzes the reduction of ubiquinone-1 to ubiquinol by two successive reactions, coupled with the transport of Na(+) ions from the cytoplasm to the periplasm. NqrA to NqrE are probably involved in the second step, the conversion of ubisemiquinone to ubiquinol. This Idiomarina loihiensis (strain ATCC BAA-735 / DSM 15497 / L2-TR) protein is Na(+)-translocating NADH-quinone reductase subunit E.